The primary structure comprises 361 residues: Cell cycle control protein 50A (361 aa).

Positions 1 to 28 (MAMNYNAKDEVDGGPPCPPGGTAKTRRP) are disordered. Ala-2 carries the post-translational modification N-acetylalanine. The interval 2–48 (AMNYNAKDEVDGGPPCPPGGTAKTRRPDNTAFKQQRLPAWQPILTAG) is required for ATPase and aminophospholipid flippase activity. Residues 2–49 (AMNYNAKDEVDGGPPCPPGGTAKTRRPDNTAFKQQRLPAWQPILTAGT) are Cytoplasmic-facing. The tract at residues 49–348 (TVLPTFFIIG…LGVVLLVINH (300 aa)) is interaction with ATP8A2. The chain crosses the membrane as a helical span at residues 50 to 70 (VLPTFFIIGLIFIPIGIGIFV). Over 71–325 (TSNNIREIEI…SWMGGKNPFL (255 aa)) the chain is Exoplasmic loop. 3 cysteine pairs are disulfide-bonded: Cys-91-Cys-104, Cys-94-Cys-102, and Cys-157-Cys-171. N-linked (GlcNAc...) asparagine glycosylation is found at Asn-180, Asn-190, and Asn-294. A helical transmembrane segment spans residues 326-346 (GIAYITIGSISFLLGVVLLVI). The Cytoplasmic portion of the chain corresponds to 347–361 (NHKYRNSSNTADITI).

Belongs to the CDC50/LEM3 family. In terms of assembly, component of various P4-ATPase flippase complexes which consists of a catalytic alpha subunit and an accessory beta subunit. Interacts with ATP8A1 to form a flippase complex; this complex forms an intermediate phosphoenzyme. Interacts with ATP8A2 to form a flippase complex. ATP8B1:TMEM30A and ATP8B2:TMEM30A flippase complexes have been shown to form intermediate phosphoenzymes in vitro. Interacts with alpha subunits ATP8A1, ATP8B1, ATP8B2, ATP8B4, ATP10A, ATP10B, ATP10D, ATP11A, ATP11B and ATP11C. In terms of processing, N-glycosylated; contributes to ATP8A2:TMEM30A flippase complex assembly but not to functional activity. In terms of tissue distribution, expressed in photoreceptor cells; detected in retina outer segment and other retinal layers (at protein level).

The protein localises to the membrane. The protein resides in the golgi apparatus. Its subcellular location is the cytoplasmic vesicle. It is found in the secretory vesicle membrane. It localises to the apical cell membrane. The protein localises to the photoreceptor inner segment. The protein resides in the cell projection. Its subcellular location is the cilium. It is found in the photoreceptor outer segment. Accessory component of a P4-ATPase flippase complex which catalyzes the hydrolysis of ATP coupled to the transport of aminophospholipids from the outer to the inner leaflet of various membranes and ensures the maintenance of asymmetric distribution of phospholipids. Phospholipid translocation also seems to be implicated in vesicle formation and in uptake of lipid signaling molecules. The beta subunit may assist in binding of the phospholipid substrate. Required for the proper folding, assembly and ER to Golgi exit of the ATP8A2:TMEM30A flippase complex. ATP8A2:TMEM30A may be involved in regulation of neurite outgrowth, and, reconstituted to liposomes, predomiminantly transports phosphatidylserine (PS) and to a lesser extent phosphatidylethanolamine (PE). The ATP8A1:TMEM30A flippase complex seems to play a role in regulation of cell migration probably involving flippase-mediated translocation of phosphatidylethanolamine (PE) at the plasma membrane. Required for the formation of the ATP8A2, ATP8B1 and ATP8B2 P-type ATPAse intermediate phosphoenzymes. Involved in uptake of platelet-activating factor (PAF). Can also mediate the export of alpha subunits ATP8A1, ATP8B1, ATP8B2, ATP8B4, ATP10A, ATP10B, ATP10D, ATP11A, ATP11B and ATP11C from the ER to other membrane localizations. This chain is Cell cycle control protein 50A, found in Bos taurus (Bovine).